A 342-amino-acid chain; its full sequence is Protein FDO1 (342 aa).

Disordered stretches follow at residues Met1–Asp36, Met57–Val76, and Gly299–Thr322. Over residues Ala15–Glu25 the composition is skewed to polar residues. Residues Asn308–Gly319 show a composition bias toward basic and acidic residues.

As to quaternary structure, interacts with FKH1.

Functionally, in concert with FKH1, plays a role in directionality of mating type switching by controlling which donor mating-type locus is inserted into MAT locus during mating type switching. The polypeptide is Protein FDO1 (Saccharomyces cerevisiae (strain ATCC 204508 / S288c) (Baker's yeast)).